Consider the following 128-residue polypeptide: Small ribosomal subunit protein eS6 (128 aa).

Belongs to the eukaryotic ribosomal protein eS6 family.

This is Small ribosomal subunit protein eS6 from Thermoplasma volcanium (strain ATCC 51530 / DSM 4299 / JCM 9571 / NBRC 15438 / GSS1).